Consider the following 464-residue polypeptide: MKSTVEQLSPTRVRINVEVPFEELKPDFDKAYKALAQQIRLPGFRPGKAPAKLLEARVGRGAVLEQVVNDALPSRYSEAVTSASVKAIGQPEIEITKIEDGELLEFTAEVDVRPEITLPDYSELSVTVDPIEITDEAVEEQLLSLRQRFGTLTGVERAVEDGDFISIDLSATVDGEAVPEATASGLSHEVGSGQLIEGLDEAVVGVKAGESKEFTSTLVAGDHAGKEAVVTVTVGTVKERELPAEDDEFAQLASEFDTLDELKADLRERVGRVRKVEQAGQIRDKVLETLLETVEVPLPEAVVKAEVDAALHDAVHGLDHDEDALNKLLEEQGTSREEFDKDAKDSAERSVKTQLLLDAIADASDVTVGQDELTERILFQAQRYGMAPEQFIQQIQQAGQLGAVFADVRRGKALAGVVEQATVTDTSGASVDTAELFGNGEADTEEAASTDEVASDSAEGEDQK.

The 82-residue stretch at 162–243 (GDFISIDLSA…VGTVKERELP (82 aa)) folds into the PPIase FKBP-type domain. The interval 428–464 (GASVDTAELFGNGEADTEEAASTDEVASDSAEGEDQK) is disordered.

It belongs to the FKBP-type PPIase family. Tig subfamily.

The protein localises to the cytoplasm. The catalysed reaction is [protein]-peptidylproline (omega=180) = [protein]-peptidylproline (omega=0). Functionally, involved in protein export. Acts as a chaperone by maintaining the newly synthesized protein in an open conformation. Functions as a peptidyl-prolyl cis-trans isomerase. The polypeptide is Trigger factor (Rhodococcus opacus (strain B4)).